We begin with the raw amino-acid sequence, 124 residues long: Large ribosomal subunit protein uL14 (124 aa).

It belongs to the universal ribosomal protein uL14 family. As to quaternary structure, part of the 50S ribosomal subunit. Forms a cluster with proteins L3 and L19. In the 70S ribosome, L14 and L19 interact and together make contacts with the 16S rRNA in bridges B5 and B8.

Its function is as follows. Binds to 23S rRNA. Forms part of two intersubunit bridges in the 70S ribosome. The polypeptide is Large ribosomal subunit protein uL14 (Clostridium novyi (strain NT)).